A 103-amino-acid chain; its full sequence is Gene 56 protein (103 aa).

A Glutaredoxin domain is found at 9–103 (WDGAHVRTLF…DYYTASETGL (95 aa)).

The polypeptide is Gene 56 protein (56) (Mycobacterium phage L5 (Mycobacteriophage L5)).